Consider the following 410-residue polypeptide: Cysteine desulfurase IscS (410 aa).

Residues 80-81 (AT), N160, Q188, and 208-210 (SGH) contribute to the pyridoxal 5'-phosphate site. Position 211 is an N6-(pyridoxal phosphate)lysine (K211). T248 provides a ligand contact to pyridoxal 5'-phosphate. Residue C334 is the Cysteine persulfide intermediate of the active site. C334 lines the [2Fe-2S] cluster pocket.

This sequence belongs to the class-V pyridoxal-phosphate-dependent aminotransferase family. NifS/IscS subfamily. Homodimer. Forms a heterotetramer with IscU, interacts with other sulfur acceptors. Requires pyridoxal 5'-phosphate as cofactor.

It is found in the cytoplasm. It catalyses the reaction (sulfur carrier)-H + L-cysteine = (sulfur carrier)-SH + L-alanine. It participates in cofactor biosynthesis; iron-sulfur cluster biosynthesis. Master enzyme that delivers sulfur to a number of partners involved in Fe-S cluster assembly, tRNA modification or cofactor biosynthesis. Catalyzes the removal of elemental sulfur atoms from cysteine to produce alanine. Functions as a sulfur delivery protein for Fe-S cluster synthesis onto IscU, an Fe-S scaffold assembly protein, as well as other S acceptor proteins. In Rickettsia akari (strain Hartford), this protein is Cysteine desulfurase IscS.